Here is a 429-residue protein sequence, read N- to C-terminus: Adenylosuccinate synthetase (429 aa).

Residues 12–18 (GDEGKGK) and 40–42 (GHT) contribute to the GTP site. The active-site Proton acceptor is Asp13. Mg(2+) contacts are provided by Asp13 and Gly40. IMP contacts are provided by residues 13–16 (DEGK), 38–41 (NAGH), Thr128, Arg142, Gln223, Thr238, and Arg302. His41 serves as the catalytic Proton donor. 298–304 (VNTGRPR) serves as a coordination point for substrate. Residues Arg304, 330 to 332 (KLD), and 412 to 414 (GVG) contribute to the GTP site.

This sequence belongs to the adenylosuccinate synthetase family. As to quaternary structure, homodimer. Mg(2+) is required as a cofactor.

It localises to the cytoplasm. It carries out the reaction IMP + L-aspartate + GTP = N(6)-(1,2-dicarboxyethyl)-AMP + GDP + phosphate + 2 H(+). The protein operates within purine metabolism; AMP biosynthesis via de novo pathway; AMP from IMP: step 1/2. Functionally, plays an important role in the de novo pathway of purine nucleotide biosynthesis. Catalyzes the first committed step in the biosynthesis of AMP from IMP. This chain is Adenylosuccinate synthetase, found in Pseudarthrobacter chlorophenolicus (strain ATCC 700700 / DSM 12829 / CIP 107037 / JCM 12360 / KCTC 9906 / NCIMB 13794 / A6) (Arthrobacter chlorophenolicus).